We begin with the raw amino-acid sequence, 380 residues long: Alkanesulfonate monooxygenase (380 aa).

It belongs to the SsuD family. As to quaternary structure, homotetramer.

The catalysed reaction is an alkanesulfonate + FMNH2 + O2 = an aldehyde + FMN + sulfite + H2O + 2 H(+). Its function is as follows. Catalyzes the desulfonation of aliphatic sulfonates. This chain is Alkanesulfonate monooxygenase, found in Pectobacterium carotovorum subsp. carotovorum (strain PC1).